Here is a 140-residue protein sequence, read N- to C-terminus: Large ribosomal subunit protein uL13 (140 aa).

This sequence belongs to the universal ribosomal protein uL13 family. Part of the 50S ribosomal subunit.

Functionally, this protein is one of the early assembly proteins of the 50S ribosomal subunit, although it is not seen to bind rRNA by itself. It is important during the early stages of 50S assembly. This Methanosarcina mazei (strain ATCC BAA-159 / DSM 3647 / Goe1 / Go1 / JCM 11833 / OCM 88) (Methanosarcina frisia) protein is Large ribosomal subunit protein uL13.